The sequence spans 188 residues: HTH-type transcriptional repressor AcnR (188 aa).

Residues 10-70 (TNSRQEILEG…ALAREDAARM (61 aa)) enclose the HTH tetR-type domain. Positions 33–52 (TVRRLEEATGKSRGAIFHHF) form a DNA-binding region, H-T-H motif. Citrate-binding positions include 79–80 (LV), Arg-130, and Asn-134. Glu-181 is a binding site for Mg(2+). Arg-185 provides a ligand contact to citrate.

As to quaternary structure, homodimer.

AcnR negatively controls the expression of the aconitase gene acn. Binds to the imperfect inverted repeat in the acn promoter region. This Corynebacterium glutamicum (strain ATCC 13032 / DSM 20300 / JCM 1318 / BCRC 11384 / CCUG 27702 / LMG 3730 / NBRC 12168 / NCIMB 10025 / NRRL B-2784 / 534) protein is HTH-type transcriptional repressor AcnR.